Consider the following 333-residue polypeptide: Adenosine deaminase (333 aa).

The Zn(2+) site is built by His-12 and His-14. 2 residues coordinate substrate: His-14 and Asp-16. Residues 14 to 16, Ser-141, and Gly-170 each bind pentostatin; that span reads HLD. Substrate is bound at residue Gly-170. Residue His-197 coordinates Zn(2+). Pentostatin-binding residues include Glu-200, His-221, and Asp-278. Glu-200 functions as the Proton donor in the catalytic mechanism. Asp-278 is a Zn(2+) binding site. A substrate-binding site is contributed by Asp-279.

Belongs to the metallo-dependent hydrolases superfamily. Adenosine and AMP deaminases family. Adenosine deaminase subfamily. Zn(2+) serves as cofactor.

The catalysed reaction is adenosine + H2O + H(+) = inosine + NH4(+). It catalyses the reaction 2'-deoxyadenosine + H2O + H(+) = 2'-deoxyinosine + NH4(+). In terms of biological role, catalyzes the hydrolytic deamination of adenosine and 2-deoxyadenosine. The chain is Adenosine deaminase from Salmonella typhimurium (strain LT2 / SGSC1412 / ATCC 700720).